Here is a 443-residue protein sequence, read N- to C-terminus: Phenylalanine--tRNA ligase alpha subunit (443 aa).

Residues Thr-332, 375-377, and Tyr-415 each bind L-phenylalanine; that span reads QVE. Position 417 (Glu-417) interacts with Mg(2+). An L-phenylalanine-binding site is contributed by Phe-441.

This sequence belongs to the class-II aminoacyl-tRNA synthetase family. Phe-tRNA synthetase alpha subunit type 2 subfamily. In terms of assembly, heterotetramer; dimer of two heterodimers formed by FARSA and FARSB. Mg(2+) is required as a cofactor.

Its subcellular location is the cytoplasm. It carries out the reaction tRNA(Phe) + L-phenylalanine + ATP = L-phenylalanyl-tRNA(Phe) + AMP + diphosphate + H(+). The protein is Phenylalanine--tRNA ligase alpha subunit (FARSA) of Gallus gallus (Chicken).